Here is a 107-residue protein sequence, read N- to C-terminus: Large ribosomal subunit protein mL55 (107 aa).

A mitochondrion-targeting transit peptide spans 1 to 16; sequence MLLKQLPQAVQQIRCI.

The protein belongs to the mitochondrion-specific ribosomal protein mL55 family. Component of the mitochondrial ribosome large subunit (39S) which comprises a 16S rRNA and about 50 distinct proteins. In terms of tissue distribution, ubiquitously expressed (at protein level).

It is found in the mitochondrion. In terms of biological role, involved in mitochondrial biogenesis and G2/M phase cell cycle progression. The protein is Large ribosomal subunit protein mL55 (mRpL55) of Drosophila melanogaster (Fruit fly).